The chain runs to 508 residues: Maturase K (508 aa).

The protein belongs to the intron maturase 2 family. MatK subfamily.

It localises to the plastid. The protein resides in the chloroplast. Usually encoded in the trnK tRNA gene intron. Probably assists in splicing its own and other chloroplast group II introns. The sequence is that of Maturase K from Pelargonium hortorum (Common geranium).